A 206-amino-acid chain; its full sequence is Probable N-acetyltransferase 14 (206 aa).

The N-acetyltransferase domain occupies 9 to 206 (LSVREMREEE…TIVQEFRKDI (198 aa)). The next 2 helical transmembrane spans lie at 37-57 (LILYILTRPMTLLLMAVASSG) and 60-80 (FILNSFSVALVIPVLLTIVGL).

It belongs to the camello family.

It is found in the membrane. Functionally, probable acetyltransferase. In Xenopus tropicalis (Western clawed frog), this protein is Probable N-acetyltransferase 14 (nat14).